Reading from the N-terminus, the 139-residue chain is Large ribosomal subunit protein uL16 (139 aa).

Belongs to the universal ribosomal protein uL16 family. As to quaternary structure, part of the 50S ribosomal subunit.

Functionally, binds 23S rRNA and is also seen to make contacts with the A and possibly P site tRNAs. This is Large ribosomal subunit protein uL16 from Prosthecochloris aestuarii (strain DSM 271 / SK 413).